The sequence spans 195 residues: NAD(P)H-quinone oxidoreductase subunit J, chloroplastic (195 aa).

Belongs to the complex I 30 kDa subunit family. In terms of assembly, NDH is composed of at least 16 different subunits, 5 of which are encoded in the nucleus.

It localises to the plastid. Its subcellular location is the chloroplast thylakoid membrane. It catalyses the reaction a plastoquinone + NADH + (n+1) H(+)(in) = a plastoquinol + NAD(+) + n H(+)(out). The enzyme catalyses a plastoquinone + NADPH + (n+1) H(+)(in) = a plastoquinol + NADP(+) + n H(+)(out). In terms of biological role, NDH shuttles electrons from NAD(P)H:plastoquinone, via FMN and iron-sulfur (Fe-S) centers, to quinones in the photosynthetic chain and possibly in a chloroplast respiratory chain. The immediate electron acceptor for the enzyme in this species is believed to be plastoquinone. Couples the redox reaction to proton translocation, and thus conserves the redox energy in a proton gradient. The sequence is that of NAD(P)H-quinone oxidoreductase subunit J, chloroplastic from Chlorokybus atmophyticus (Soil alga).